A 160-amino-acid polypeptide reads, in one-letter code: SsrA-binding protein (160 aa).

Belongs to the SmpB family.

The protein localises to the cytoplasm. Its function is as follows. Required for rescue of stalled ribosomes mediated by trans-translation. Binds to transfer-messenger RNA (tmRNA), required for stable association of tmRNA with ribosomes. tmRNA and SmpB together mimic tRNA shape, replacing the anticodon stem-loop with SmpB. tmRNA is encoded by the ssrA gene; the 2 termini fold to resemble tRNA(Ala) and it encodes a 'tag peptide', a short internal open reading frame. During trans-translation Ala-aminoacylated tmRNA acts like a tRNA, entering the A-site of stalled ribosomes, displacing the stalled mRNA. The ribosome then switches to translate the ORF on the tmRNA; the nascent peptide is terminated with the 'tag peptide' encoded by the tmRNA and targeted for degradation. The ribosome is freed to recommence translation, which seems to be the essential function of trans-translation. In Proteus mirabilis (strain HI4320), this protein is SsrA-binding protein.